The chain runs to 343 residues: Olfactory receptor 6K6 (343 aa).

Residues 1–53 lie on the Extracellular side of the membrane; the sequence is MKQYSVGNQHSNYRSLLFPFLCSQMTQLTASGNQTMVTEFLFSMFPHAHRGGL. N-linked (GlcNAc...) asparagine glycosylation occurs at Asn33. Residues 54–74 traverse the membrane as a helical segment; sequence LFFIPLLLIYGFILTGNLIMF. The Cytoplasmic portion of the chain corresponds to 75-82; the sequence is IVIQVGMA. The helical transmembrane segment at 83–103 threads the bilayer; that stretch reads LHTPLYFFISVLSFLEICYTT. The Extracellular segment spans residues 104–127; sequence TTIPKMLSCLISEQKSISVAGCLL. Cys125 and Cys217 form a disulfide bridge. Residues 128 to 148 form a helical membrane-spanning segment; that stretch reads QMYFFHSLGITESCVLTAMAI. At 149–167 the chain is on the cytoplasmic side; that stretch reads DRYIAICNPLRYPTIMIPK. A helical transmembrane segment spans residues 168-188; sequence LCIQLTVGSCFCGFLLVLPEI. Residues 189–224 are Extracellular-facing; sequence AWISTLPFCGSNQIHQIFCDFTPVLSLACTDTFLVV. The helical transmembrane segment at 225-244 threads the bilayer; the sequence is IVDAIHAAEIVASFLVIALS. Topologically, residues 245-264 are cytoplasmic; that stretch reads YIRIIIVILGMHSAEGHHKA. A helical membrane pass occupies residues 265-285; that stretch reads FSTCAAHLAVFLLFFGSVAVM. Over 286–298 the chain is Extracellular; that stretch reads YLRFSATYSVFWD. A helical membrane pass occupies residues 299 to 319; sequence TAIAVTFVILAPFFNPIIYSL. The Cytoplasmic portion of the chain corresponds to 320–343; it reads KNKDMKEAIGRLFHYQKRAGWAGK.

This sequence belongs to the G-protein coupled receptor 1 family.

The protein localises to the cell membrane. Odorant receptor. The polypeptide is Olfactory receptor 6K6 (OR6K6) (Homo sapiens (Human)).